A 919-amino-acid polypeptide reads, in one-letter code: Eukaryotic translation initiation factor 3 subunit C (919 aa).

Residues methionine 1–alanine 28 form a disordered region. A compositionally biased stretch (acidic residues) spans serine 11–valine 20. Residues serine 34, serine 165, and serine 177 each carry the phosphoserine modification. Residues leucine 154–alanine 275 are disordered. A compositionally biased stretch (acidic residues) spans glutamine 162–glutamate 171. Residues alanine 210–asparagine 236 are compositionally biased toward acidic residues. Residues methionine 241–isoleucine 269 show a composition bias toward basic and acidic residues. One can recognise a PCI domain in the interval phenylalanine 640 to proline 816. The tract at residues phenylalanine 848–glutamate 919 is disordered. Residues glutamine 883 to asparagine 894 show a composition bias toward basic residues. Positions glutamine 895 to glutamate 919 are enriched in low complexity.

It belongs to the eIF-3 subunit C family. As to quaternary structure, component of the eukaryotic translation initiation factor 3 (eIF-3) complex. The eIF-3 complex interacts with pix.

It is found in the cytoplasm. Functionally, component of the eukaryotic translation initiation factor 3 (eIF-3) complex, which is involved in protein synthesis of a specialized repertoire of mRNAs and, together with other initiation factors, stimulates binding of mRNA and methionyl-tRNAi to the 40S ribosome. The eIF-3 complex specifically targets and initiates translation of a subset of mRNAs involved in cell proliferation. This is Eukaryotic translation initiation factor 3 subunit C from Drosophila willistoni (Fruit fly).